A 194-amino-acid polypeptide reads, in one-letter code: uncharacterized protein (194 aa).

Belongs to the mimivirus L114/R131 family.

This is an uncharacterized protein from Acanthamoeba polyphaga mimivirus (APMV).